A 194-amino-acid polypeptide reads, in one-letter code: Imidazoleglycerol-phosphate dehydratase (194 aa).

Belongs to the imidazoleglycerol-phosphate dehydratase family.

The protein localises to the cytoplasm. It carries out the reaction D-erythro-1-(imidazol-4-yl)glycerol 3-phosphate = 3-(imidazol-4-yl)-2-oxopropyl phosphate + H2O. Its pathway is amino-acid biosynthesis; L-histidine biosynthesis; L-histidine from 5-phospho-alpha-D-ribose 1-diphosphate: step 6/9. The polypeptide is Imidazoleglycerol-phosphate dehydratase (Rubrobacter xylanophilus (strain DSM 9941 / JCM 11954 / NBRC 16129 / PRD-1)).